The primary structure comprises 37 residues: Turripeptide Lol6.2 (37 aa).

Cystine bridges form between C4–C16, C8–C21, and C15–C29.

In terms of tissue distribution, expressed by the venom duct.

The protein localises to the secreted. Functionally, acts as a neurotoxin by inhibiting an ion channel. The chain is Turripeptide Lol6.2 from Iotyrris olangoensis (Sea snail).